We begin with the raw amino-acid sequence, 214 residues long: MQLFHLCLIISCTCPTLQASKLCLGWLWGMDIDPYKEFGASVELLSFLPSDFFPSVRDLLDTSAALYREALESPEHCSPHHTALRQAILCWGELMTLATWVGNNLQDPASRDQVVNYVNTNMGLKIRQLLWFHISCLTFGRQTVLEYLVSFGVWIRTPPPYRPPNAPILSTLPETTVVRRRDRGRSPRRRTPSPRRRRSQSPRRRRSQSRESQC.

An N-terminal signal peptide occupies residues 1–19 (MQLFHLCLIISCTCPTLQA). Residues 25–27 (GWL) are HBEAG. The segment at 164 to 214 (PNAPILSTLPETTVVRRRDRGRSPRRRTPSPRRRRSQSPRRRRSQSRESQC) is disordered. The span at 178–207 (VRRRDRGRSPRRRTPSPRRRRSQSPRRRRS) shows a compositional bias: basic residues. Residues 186–192 (SPRRRTP) form a 1; half-length repeat. A 3 X 8 AA repeats of S-P-R-R-R-R-S-Q region spans residues 186–208 (SPRRRTPSPRRRRSQSPRRRRSQ). Residues 186-214 (SPRRRTPSPRRRRSQSPRRRRSQSRESQC) constitute a propeptide that is removed on maturation. Tandem repeats lie at residues 193–200 (SPRRRRSQ) and 201–208 (SPRRRRSQ).

Belongs to the orthohepadnavirus precore antigen family. In terms of assembly, homodimerizes. Post-translationally, phosphorylated. Cleaved by host furin.

The protein resides in the secreted. Its subcellular location is the host nucleus. In terms of biological role, may regulate immune response to the intracellular capsid in acting as a T-cell tolerogen, by having an immunoregulatory effect which prevents destruction of infected cells by cytotoxic T-cells. This immune regulation may predispose to chronicity during perinatal infections and prevent severe liver injury during adult infections. This Homo sapiens (Human) protein is External core antigen.